We begin with the raw amino-acid sequence, 1203 residues long: Metabotropic glutamate receptor 5 (1203 aa).

The N-terminal stretch at 1 to 18 is a signal peptide; sequence MVLLLILSVLLLKEDVRG. Residues 19–579 are Extracellular-facing; that stretch reads SAQSSERRVV…QYLRWGDPEP (561 aa). A disulfide bridge links Cys57 with Cys99. An L-glutamate-binding site is contributed by Tyr64. Residue Asn88 is glycosylated (N-linked (GlcNAc...) asparagine). L-glutamate-binding positions include Ser151 and 172–174; that span reads SAT. Residue Asn209 is glycosylated (N-linked (GlcNAc...) asparagine). Tyr222 contacts L-glutamate. 8 disulfide bridges follow: Cys240/Cys529, Cys275/Cys277, Cys364/Cys380, Cys418/Cys425, Cys510/Cys530, Cys514/Cys533, Cys536/Cys548, and Cys551/Cys564. Asp304 provides a ligand contact to L-glutamate. N-linked (GlcNAc...) asparagine glycosylation is found at Asn377 and Asn381. Lys395 lines the L-glutamate pocket. Asn444 carries an N-linked (GlcNAc...) asparagine glycan. A helical transmembrane segment spans residues 580–602; the sequence is IAAVVFACLGLLATLFVTVIFII. Topologically, residues 603 to 612 are cytoplasmic; the sequence is YRDTPVVKSS. The helical transmembrane segment at 613-635 threads the bilayer; sequence SRELCYIILAGICLGYLCTFCLI. The Extracellular segment spans residues 636–643; sequence AKPKQIYC. Residues Cys643 and Cys732 are joined by a disulfide bond. Residues 644 to 666 traverse the membrane as a helical segment; the sequence is YLQRIGIGLSPAMSYSALVTKTN. The Cytoplasmic segment spans residues 667–692; the sequence is RIARILAGSKKKICTKKPRFMSACAQ. Residues 693–713 traverse the membrane as a helical segment; it reads LVIAFILICIQLGIIVALFIM. The Extracellular segment spans residues 714–736; the sequence is EPPDIMHDYPSIREVYLICNTTN. An N-linked (GlcNAc...) asparagine glycan is attached at Asn733. The chain crosses the membrane as a helical span at residues 737-758; that stretch reads LGVVTPLGYNGLLILSCTFYAF. Over 759 to 771 the chain is Cytoplasmic; the sequence is KTRNVPANFNEAK. The chain crosses the membrane as a helical span at residues 772–794; sequence YIAFTMYTTCIIWLAFVPIYFGS. Topologically, residues 795–797 are extracellular; sequence NYK. Residues 798 to 819 traverse the membrane as a helical segment; that stretch reads IITMCFSVSLSATVALGCMFVP. Residues 820–1203 lie on the Cytoplasmic side of the membrane; sequence KVYIILAKPE…RDYTQSSSSL (384 aa). Ser860 is subject to Phosphoserine. Arg868 bears the Omega-N-methylarginine mark. Disordered stretches follow at residues 892–1054 and 1120–1182; these read FTPK…GSLM and TGGA…ALCI. Residues 905–920 are compositionally biased toward polar residues; it reads TMSSSNGKSVTWAQNE. Position 924 is an omega-N-methylarginine (Arg924). Positions 960 to 977 are enriched in gly residues; it reads QGAGAGGGSGPGAAGAGS. The span at 1007-1019 shows a compositional bias: low complexity; the sequence is PAAARPRSPSPIS. Ser1014 and Ser1016 each carry phosphoserine. 2 stretches are compositionally biased toward polar residues: residues 1039–1054 and 1165–1176; these read HSET…GSLM and DSGSTTPNSPVS.

It belongs to the G-protein coupled receptor 3 family. The PPXXF motif binds HOMER1, HOMER2 and HOMER3. Interacts with RYR1, RYR2, ITPR1, SHANK1 and SHANK3. Interacts with SIAH1 and TAMALIN. Interacts with NCDN. Interacts with NECAB2. Interacts with CAMK2A.

Its subcellular location is the cell membrane. G-protein coupled receptor for glutamate. Ligand binding causes a conformation change that triggers signaling via guanine nucleotide-binding proteins (G proteins) and modulates the activity of down-stream effectors. Signaling activates a phosphatidylinositol-calcium second messenger system and generates a calcium-activated chloride current. Plays an important role in the regulation of synaptic plasticity and the modulation of the neural network activity. The protein is Metabotropic glutamate receptor 5 (Grm5) of Mus musculus (Mouse).